A 189-amino-acid polypeptide reads, in one-letter code: Peptidyl-tRNA hydrolase (189 aa).

Tyr15 provides a ligand contact to tRNA. His20 acts as the Proton acceptor in catalysis. Residues Phe66, Asn68, and Asn114 each coordinate tRNA.

It belongs to the PTH family. As to quaternary structure, monomer.

Its subcellular location is the cytoplasm. The catalysed reaction is an N-acyl-L-alpha-aminoacyl-tRNA + H2O = an N-acyl-L-amino acid + a tRNA + H(+). Its function is as follows. Hydrolyzes ribosome-free peptidyl-tRNAs (with 1 or more amino acids incorporated), which drop off the ribosome during protein synthesis, or as a result of ribosome stalling. Functionally, catalyzes the release of premature peptidyl moieties from peptidyl-tRNA molecules trapped in stalled 50S ribosomal subunits, and thus maintains levels of free tRNAs and 50S ribosomes. This Dichelobacter nodosus (strain VCS1703A) protein is Peptidyl-tRNA hydrolase.